The sequence spans 110 residues: Large ribosomal subunit protein uL22 (110 aa).

This sequence belongs to the universal ribosomal protein uL22 family. Part of the 50S ribosomal subunit.

In terms of biological role, this protein binds specifically to 23S rRNA; its binding is stimulated by other ribosomal proteins, e.g. L4, L17, and L20. It is important during the early stages of 50S assembly. It makes multiple contacts with different domains of the 23S rRNA in the assembled 50S subunit and ribosome. Functionally, the globular domain of the protein is located near the polypeptide exit tunnel on the outside of the subunit, while an extended beta-hairpin is found that lines the wall of the exit tunnel in the center of the 70S ribosome. The polypeptide is Large ribosomal subunit protein uL22 (Variovorax paradoxus (strain S110)).